The primary structure comprises 272 residues: Elongation factor Ts (272 aa).

Residues 86–89 are involved in Mg(2+) ion dislocation from EF-Tu; it reads TDFV.

Belongs to the EF-Ts family.

The protein localises to the cytoplasm. Associates with the EF-Tu.GDP complex and induces the exchange of GDP to GTP. It remains bound to the aminoacyl-tRNA.EF-Tu.GTP complex up to the GTP hydrolysis stage on the ribosome. The protein is Elongation factor Ts of Blochmanniella pennsylvanica (strain BPEN).